Reading from the N-terminus, the 389-residue chain is Phospho-N-acetylmuramoyl-pentapeptide-transferase (389 aa).

10 helical membrane passes run 25-45 (RAVMATVTALLIGLAAGPWVI), 73-93 (TMGGVLILIGIFISCILWADL), 97-117 (FIWIVMIVTFGFGLVGWVDDY), 134-154 (FFWQTLIGLFAAIYLAFSVSE), 190-210 (VSYPLGIMGFIILSYLVIVGS), 222-242 (GLVIMPVILVGAALGAFAYVM), 258-278 (GAGELMIFCGAMGGAGLAFLW), 286-306 (VFMGDVGALALGGALGTIAVI), 311-331 (IVLFVMGGIFVAETISVMLQV), and 366-386 (QVVVRFWIITILLVLIGLSSL).

This sequence belongs to the glycosyltransferase 4 family. MraY subfamily. It depends on Mg(2+) as a cofactor.

It is found in the cell inner membrane. It catalyses the reaction UDP-N-acetyl-alpha-D-muramoyl-L-alanyl-gamma-D-glutamyl-meso-2,6-diaminopimeloyl-D-alanyl-D-alanine + di-trans,octa-cis-undecaprenyl phosphate = di-trans,octa-cis-undecaprenyl diphospho-N-acetyl-alpha-D-muramoyl-L-alanyl-D-glutamyl-meso-2,6-diaminopimeloyl-D-alanyl-D-alanine + UMP. It participates in cell wall biogenesis; peptidoglycan biosynthesis. In terms of biological role, catalyzes the initial step of the lipid cycle reactions in the biosynthesis of the cell wall peptidoglycan: transfers peptidoglycan precursor phospho-MurNAc-pentapeptide from UDP-MurNAc-pentapeptide onto the lipid carrier undecaprenyl phosphate, yielding undecaprenyl-pyrophosphoryl-MurNAc-pentapeptide, known as lipid I. This is Phospho-N-acetylmuramoyl-pentapeptide-transferase from Polynucleobacter necessarius subsp. necessarius (strain STIR1).